The sequence spans 138 residues: Basic phospholipase A2 ammodytoxin B (138 aa).

A signal peptide spans 1-16 (MRTLWIVAVCLIGVEG). Intrachain disulfides connect C42–C131, C44–C60, C59–C111, C65–C138, C66–C104, C73–C97, and C91–C102. Ca(2+) is bound by residues Y43, G45, and G47. H63 is a catalytic residue. D64 contacts Ca(2+). D105 is a catalytic residue.

This sequence belongs to the phospholipase A2 family. Group II subfamily. D49 sub-subfamily. As to quaternary structure, monomer. Binds to calmodulin, coagulation factor X (F10), M-type PLA2 receptor (R-180), 14-3-3 proteins gamma (YWHAG) and epsilon (YWHAE), and R25, a mitochondrial membrane protein. Ca(2+) serves as cofactor. In terms of tissue distribution, expressed by the venom gland.

It localises to the secreted. The protein resides in the host cytoplasm. Its subcellular location is the host cytosol. It catalyses the reaction a 1,2-diacyl-sn-glycero-3-phosphocholine + H2O = a 1-acyl-sn-glycero-3-phosphocholine + a fatty acid + H(+). Its function is as follows. Snake venom phospholipase A2 (PLA2) that acts as a presynaptic neurotoxin, an inhibitor of blood coagulation, and has been found to bind with high affinity to intracellular proteins. The response of indirectly stimulated neuromuscular preparations to ammodytoxin (Atx) is triphasic. The first phase, the transient inhibition of the acetylcholine (ACh) release, starts soon after the addition of Atx and lasts for several minutes. This phase is probably independent of Atx enzymatic activity. The effect may be due to the specific binding of the toxin to presynaptic receptors. These receptors, called N-type receptors, are still unidentified. It is noteworthy that a neuronal isoform of the M-type PLA2 receptor (R180) has been identified as a high-affinity receptor for Atx in neuronal plasma membranes. It was demonstrated however that this receptor is not essential for expression of neurotoxicity by Atx. The second phase corresponds to an augmentation of neurotransmitter release. A peak is reached 10-20 minutes after exposure of the preparation to Atx and is followed by a gradual reduction. In this phase, the enzymatic activity of Atx of the mammalian is not significant. It is speculated that the increased release of neurotransmitter in this phase is induced by the interference of Atx with voltage-gated potassium channels. Measurements of ionic currents showed however that voltage-gated potassium channels are not affected by Atx. The third phase of the response of neuromuscular preparations to Atx, which corresponds to a complete and irreversible paralysis, is clearly dependent on the hydrolytic activity of the toxin. In addition to its presynaptic neurotoxicity, Atx shows an anticoagulant activity by binding with high affinity to activated coagulation factor X (F10) thus inhibiting the formation of the prothrombinase complex (FX/FV) and its activity (IC(50) is 82 nM). Surprisingly, Atx was discovered to bind intracellular proteins such as calmodulin (CaM), 14-3-3 proteins gamma (YWHAG) and epsilon (YWHAE) (by similarity with AtxC), as well as R25 (by similarity with AtxC), a mitochondrial integral membrane protein found in cerebral cortex. These findings raised a doubt about the dogma of the exclusively extracellular action of PLA2s, defended by the potential instability of these molecules in the reducing environment of the eukaryotic cytosol coupled with their possible inability to act as enzymes in this cellular compartment, due to too low concentration of calcium ions. This hypothesis was challenged efficiently by demonstrating the internalization of AtxA into a culture cells, but still remains to be directly demonstrated in vivo. PLA2 catalyzes the calcium-dependent hydrolysis of the 2-acyl groups in 3-sn-phosphoglycerides. The sequence is that of Basic phospholipase A2 ammodytoxin B from Vipera ammodytes ammodytes (Western sand viper).